An 859-amino-acid chain; its full sequence is ATP-dependent RNA helicase DDX24 (859 aa).

Lys17 is modified (N6-acetyllysine). Ser60 is modified (phosphoserine). The disordered stretch occupies residues 61-170 (PAKNPSSLFS…KGLEPSQSTA (110 aa)). At Lys71 the chain carries N6-acetyllysine. Phosphoserine occurs at positions 82 and 94. The segment covering 94–105 (SPKKKIKLKKSK) has biased composition (basic residues). Positions 106 to 115 (NVATEGTSTQ) are enriched in polar residues. The span at 125 to 139 (LEAQGDDMVCDDPEA) shows a compositional bias: acidic residues. The Q motif motif lies at 192-220 (SAWKDLFVPRPVLRALSFLGFSAPTPIQA). The 305-residue stretch at 224–528 (APAIRDKLDI…RILHKKHTKK (305 aa)) folds into the Helicase ATP-binding domain. 237-244 (AETGSGKT) is an ATP binding site. Positions 262 to 300 (NAAPPPSNTEAPPGETRTEAGAETRSPGKAEAESDALPD) are disordered. A compositionally biased stretch (basic and acidic residues) spans 277-293 (TRTEAGAETRSPGKAEA). Ser287 and Ser295 each carry phosphoserine. Thr302 is modified (phosphothreonine). The disordered stretch occupies residues 326-376 (SDQALLFGDDDAGEGPSSLIREKPVPKQNENEEENLDKEQTGNLKQELDDK). A Glycyl lysine isopeptide (Lys-Gly) (interchain with G-Cter in SUMO2) cross-link involves residue Lys370. A DEAD box motif is present at residues 471–474 (DEAD). The Helicase C-terminal domain occupies 578 to 723 (YLYYFLMQYP…LFPVQTKYMD (146 aa)). Residues Lys624, Lys808, and Lys825 each participate in a glycyl lysine isopeptide (Lys-Gly) (interchain with G-Cter in SUMO2) cross-link. Composition is skewed to polar residues over residues 799 to 814 (PLFT…TQSG) and 823 to 833 (PSKSESALSCL). The interval 799 to 859 (PLFTESQKTK…EQPQPSTSAN (61 aa)) is disordered.

Belongs to the DEAD box helicase family. DDX24/MAK5 subfamily. In terms of assembly, interacts with FADD. Interacts with RIPK1; this interaction disrupts RLR signaling activation of IFN-dependent transcription factor IRF7. Interacts with NIP7. Interacts with EP300; this interaction prevents TP53 acetylation mediated by EP300. As to quaternary structure, (Microbial infection) Interacts with HIV-1 virus Gag and Rev proteins. Post-translationally, ubiquitinated by MDM2 without targeting DDX24 for proteasomal degradation. Instead, polyubiquitinated DDX24 promotes interaction with NIP7, a component of pre-rRNP processing complex, and associates with pre-rRNA molecules and pre-ribosomal particles. Ubiquitous. Most abundant in heart and brain, but with lowest levels in thymus and small intestine.

It is found in the cytoplasm. Its subcellular location is the nucleus. The enzyme catalyses ATP + H2O = ADP + phosphate + H(+). In terms of biological role, ATP-dependent RNA helicase that plays a role in various aspects of RNA metabolism including pre-mRNA splicing and is thereby involved in different biological processes such as cell cycle regulation or innate immunity. Plays an inhibitory role in TP53 transcriptional activity and subsequently in TP53 controlled cell growth arrest and senescence by inhibiting its EP300 mediated acetylation. Negatively regulates cytosolic RNA-mediated innate immune signaling at least in part by affecting RIPK1/IRF7 interactions. Alternatively, possesses antiviral activity by recognizing gammaherpesvirus transcripts in the context of lytic reactivation. Plays an essential role in cell cycle regulation in vascular smooth muscle cells by interacting with and regulating FANCA (Fanconi anemia complementation group A) mRNA. (Microbial infection) Plays a positive role in HIV-1 infection by promoting Rev-dependent nuclear export of viral RNAs and their packaging into virus particles. This is ATP-dependent RNA helicase DDX24 (DDX24) from Homo sapiens (Human).